The following is a 364-amino-acid chain: Peroxisome biogenesis protein 3-2 (364 aa).

Residues 15-32 (VLVTAGCLGSGYLLYKLY) traverse the membrane as a helical segment. Positions 33–62 (NSHTRRLADLERELAHERENDEIIKTQMKA) form a coiled coil.

The protein belongs to the peroxin-3 family.

The protein localises to the peroxisome membrane. In terms of biological role, involved in morphology determination of peroxisomes, but not in import of peroxisomal matrix proteins. May act as a docking factor for PEX19 and be necessary for the import of peroxisomal membrane proteins in the peroxisomes. This is Peroxisome biogenesis protein 3-2 (PEX3-2) from Arabidopsis thaliana (Mouse-ear cress).